A 280-amino-acid chain; its full sequence is Protein synthesis inhibitor II (280 aa).

Alanine 1 is subject to N-acetylalanine. Glutamate 174 is an active-site residue.

The protein belongs to the ribosome-inactivating protein family. Type 1 RIP subfamily.

The protein localises to the cytoplasm. It carries out the reaction Endohydrolysis of the N-glycosidic bond at one specific adenosine on the 28S rRNA.. Inhibits the elongation phase of protein synthesis. It inactivates fungal ribosomes even more effectively than mammalian ribosomes and is thought to function as a constitutive antifungal agent in plants. This is Protein synthesis inhibitor II (RIP30A) from Hordeum vulgare (Barley).